Reading from the N-terminus, the 507-residue chain is Glycosyltransferase family 92 protein C33H5.2 (507 aa).

The chain crosses the membrane as a helical span at residues 6 to 26; sequence VILVFCASFALFFTFIIFGRY. Positions 155-444 constitute a GT92 domain; the sequence is RDVVMCIAPL…LKCYNEKFYD (290 aa).

Belongs to the glycosyltransferase 92 family.

The protein localises to the membrane. This is Glycosyltransferase family 92 protein C33H5.2 from Caenorhabditis elegans.